We begin with the raw amino-acid sequence, 474 residues long: ATP synthase subunit beta (474 aa).

ATP is bound at residue 151 to 158 (GGAGVGKT).

This sequence belongs to the ATPase alpha/beta chains family. F-type ATPases have 2 components, CF(1) - the catalytic core - and CF(0) - the membrane proton channel. CF(1) has five subunits: alpha(3), beta(3), gamma(1), delta(1), epsilon(1). CF(0) has four main subunits: a(1), b(1), b'(1) and c(9-12).

It is found in the cell inner membrane. The enzyme catalyses ATP + H2O + 4 H(+)(in) = ADP + phosphate + 5 H(+)(out). Functionally, produces ATP from ADP in the presence of a proton gradient across the membrane. The catalytic sites are hosted primarily by the beta subunits. The chain is ATP synthase subunit beta from Roseobacter denitrificans (strain ATCC 33942 / OCh 114) (Erythrobacter sp. (strain OCh 114)).